We begin with the raw amino-acid sequence, 447 residues long: MSRKLFGTDGVRGRANTHPMTAEMALRLGAAAGRYFRRSGEDHHRVVIGKDTRLSGYMLENALTAGLTSTGMNVLLLGPVPTPAVGYLTRSMRADVGIMISASHNPAHDNGIKFFGPDGFKLSDEAEARIEAIVAGEIIPAQPQNIGRAKRIDDGRGRYVEYAKTTFPSGQRLEGLKVVVDCANGAAYRAAPDVLWELGAEVIPLGVSPNGHNINDGLGSTHPEACARAVLEHGADMGISLDGDADRVMIVDEKGQVADGDQIMALLAARWAAQGRLRGGALVATVMSNLGLERFLQGRGLRLERTAVGDRYVVERMRGAGFNLGGEQSGHIVMTDYATTGDGLIASLQFLAALSDSGQRASELVAQFEPVPQLLKNVRYAVGADPLSKDSVQAEIARAEARLNGSGRVLIRKSGTEPLIRVMAEAEDETVLREVVEDIVAAVEKAA.

Serine 103 serves as the catalytic Phosphoserine intermediate. Mg(2+) is bound by residues serine 103, aspartate 242, aspartate 244, and aspartate 246. Serine 103 carries the phosphoserine modification.

It belongs to the phosphohexose mutase family. Requires Mg(2+) as cofactor. Activated by phosphorylation.

The enzyme catalyses alpha-D-glucosamine 1-phosphate = D-glucosamine 6-phosphate. Catalyzes the conversion of glucosamine-6-phosphate to glucosamine-1-phosphate. This chain is Phosphoglucosamine mutase, found in Paracoccus denitrificans (strain Pd 1222).